The chain runs to 198 residues: Probable thymidylate kinase (198 aa).

7–14 (GIDGAGKS) provides a ligand contact to ATP.

It belongs to the thymidylate kinase family.

The catalysed reaction is dTMP + ATP = dTDP + ADP. In Methanocorpusculum labreanum (strain ATCC 43576 / DSM 4855 / Z), this protein is Probable thymidylate kinase.